Here is a 95-residue protein sequence, read N- to C-terminus: Large ribosomal subunit protein uL23 (95 aa).

The protein belongs to the universal ribosomal protein uL23 family. In terms of assembly, part of the 50S ribosomal subunit. Contacts protein L29, and trigger factor when it is bound to the ribosome.

One of the early assembly proteins it binds 23S rRNA. One of the proteins that surrounds the polypeptide exit tunnel on the outside of the ribosome. Forms the main docking site for trigger factor binding to the ribosome. The polypeptide is Large ribosomal subunit protein uL23 (Levilactobacillus brevis (strain ATCC 367 / BCRC 12310 / CIP 105137 / JCM 1170 / LMG 11437 / NCIMB 947 / NCTC 947) (Lactobacillus brevis)).